We begin with the raw amino-acid sequence, 387 residues long: MEKIEEQFANLHIVKCSLGTKEPTYLLGIDTSKTVQAGKENLVAVLCSNGSIRIYDKERLSVLREFSGYPGLLNGVRFANSCDSVYSACTDGTVKCWDARVAREKPVQLFKGYPSNIFISFDINCNDHIICAGTEKVDDDALLVFWDARMNSQDLSTTKDPLGAYSETHSDDVTQVRFHPSNPNMVVSGSSDGLVNVFDINIDNEEDALVTTCNSISSVSCIGWSGKGYKQIYCMTHDEGFYWWDLNHLDTDEPVTRLNIQDVREVVNMKEDALDYLIGGLYHEKTDTLHVIGGTNKGRIHLMNCSVSGLTHVTSLQGGHAATVRSFCWNVQDDSLLTGGEDAQLLLWKPGAIEKTFTKKESMKIASSVHQRVRVHSNDSYKRRKKQ.

WD repeat units follow at residues lysine 21–glutamate 65, glycine 68–valine 107, glycine 112–serine 156, threonine 168–alanine 208, asparagine 214–proline 254, and glycine 319–threonine 358.

This Pongo abelii (Sumatran orangutan) protein is WD repeat-containing protein 89 (WDR89).